Here is a 180-residue protein sequence, read N- to C-terminus: Oligoribonuclease (180 aa).

Residues 7–170 (LIWIDLEMTG…DDIRESIAEL (164 aa)) enclose the Exonuclease domain. Residue tyrosine 128 is part of the active site.

The protein belongs to the oligoribonuclease family.

It localises to the cytoplasm. In terms of biological role, 3'-to-5' exoribonuclease specific for small oligoribonucleotides. In Pseudomonas fluorescens (strain ATCC BAA-477 / NRRL B-23932 / Pf-5), this protein is Oligoribonuclease.